Consider the following 715-residue polypeptide: Fatty acid oxidation complex subunit alpha (715 aa).

Residues methionine 1–alanine 190 are enoyl-CoA hydratase/isomerase. Residue aspartate 297 coordinates substrate. Residues histidine 312–asparagine 715 are 3-hydroxyacyl-CoA dehydrogenase. Residues methionine 325, aspartate 344, valine 401 to glutamate 403, lysine 408, and serine 430 contribute to the NAD(+) site. Histidine 451 serves as the catalytic For 3-hydroxyacyl-CoA dehydrogenase activity. Asparagine 454 lines the NAD(+) pocket. Positions 501 and 660 each coordinate substrate.

In the N-terminal section; belongs to the enoyl-CoA hydratase/isomerase family. The protein in the C-terminal section; belongs to the 3-hydroxyacyl-CoA dehydrogenase family. As to quaternary structure, heterotetramer of two alpha chains (FadB) and two beta chains (FadA).

The enzyme catalyses a (3S)-3-hydroxyacyl-CoA + NAD(+) = a 3-oxoacyl-CoA + NADH + H(+). It carries out the reaction a (3S)-3-hydroxyacyl-CoA = a (2E)-enoyl-CoA + H2O. The catalysed reaction is a 4-saturated-(3S)-3-hydroxyacyl-CoA = a (3E)-enoyl-CoA + H2O. It catalyses the reaction (3S)-3-hydroxybutanoyl-CoA = (3R)-3-hydroxybutanoyl-CoA. The enzyme catalyses a (3Z)-enoyl-CoA = a 4-saturated (2E)-enoyl-CoA. It carries out the reaction a (3E)-enoyl-CoA = a 4-saturated (2E)-enoyl-CoA. Its pathway is lipid metabolism; fatty acid beta-oxidation. Involved in the aerobic and anaerobic degradation of long-chain fatty acids via beta-oxidation cycle. Catalyzes the formation of 3-oxoacyl-CoA from enoyl-CoA via L-3-hydroxyacyl-CoA. It can also use D-3-hydroxyacyl-CoA and cis-3-enoyl-CoA as substrate. The protein is Fatty acid oxidation complex subunit alpha of Pseudomonas putida (strain ATCC 700007 / DSM 6899 / JCM 31910 / BCRC 17059 / LMG 24140 / F1).